The following is a 186-amino-acid chain: Peptidyl-tRNA hydrolase (186 aa).

Y16 contacts tRNA. Residue H21 is the Proton acceptor of the active site. Residues Y60 and N62 each coordinate tRNA.

This sequence belongs to the PTH family. Monomer.

The protein localises to the cytoplasm. The catalysed reaction is an N-acyl-L-alpha-aminoacyl-tRNA + H2O = an N-acyl-L-amino acid + a tRNA + H(+). In terms of biological role, hydrolyzes ribosome-free peptidyl-tRNAs (with 1 or more amino acids incorporated), which drop off the ribosome during protein synthesis, or as a result of ribosome stalling. Functionally, catalyzes the release of premature peptidyl moieties from peptidyl-tRNA molecules trapped in stalled 50S ribosomal subunits, and thus maintains levels of free tRNAs and 50S ribosomes. This Tropheryma whipplei (strain Twist) (Whipple's bacillus) protein is Peptidyl-tRNA hydrolase.